The primary structure comprises 72 residues: Conorfamide-Tx2 (72 aa).

An N-terminal signal peptide occupies residues 1–19; sequence MSGRGFLLLALLLLVTVEA. Residues 20–25 constitute a propeptide that is removed on maturation; the sequence is TRVEKK. Residues 32–39 form a positively charged region crucial for activity against MRGPRX1 receptors region; sequence AWSGPRNR. Isoleucine amide is present on Ile43. Positions 44 to 72 are excised as a propeptide; that stretch reads GRRDMQSPLLSERLRFRALGFRQPSSQKQ.

The protein belongs to the FARP (FMRFamide related peptide) family. In terms of tissue distribution, expressed by the venom duct.

It localises to the secreted. In terms of biological role, this peptide activates human sensory neuron-specific G-protein coupled receptors MRGPRX1, but not mouse receptors (EC(50)=0.54 uM). Compared with the agonist chloroquine (anti-malaria drug), it is 600-fold more potent. In vivo, induces itch sensation, since intradermal cheek injection into humanized transgenic mouse (mouse MRGPRX1 replaced by human MRGPRX1) induces scratching. In vivo, treatment of zebrafish larvae with high doses (10 uM) induces hypoactivity at the beginning of the experiment during the dark phase and hyperactivity in the strobe phase after one hour, even after the removal of the toxin from the solution. The sequence is that of Conorfamide-Tx2 from Conus textile (Cloth-of-gold cone).